The following is a 39-amino-acid chain: Cytochrome b559 subunit beta (39 aa).

A helical transmembrane segment spans residues Trp-14 to Ser-30. His-18 serves as a coordination point for heme.

It belongs to the PsbE/PsbF family. In terms of assembly, heterodimer of an alpha subunit and a beta subunit. PSII is composed of 1 copy each of membrane proteins PsbA, PsbB, PsbC, PsbD, PsbE, PsbF, PsbH, PsbI, PsbJ, PsbK, PsbL, PsbM, PsbT, PsbX, PsbY, PsbZ, Psb30/Ycf12, at least 3 peripheral proteins of the oxygen-evolving complex and a large number of cofactors. It forms dimeric complexes. The cofactor is heme b.

It is found in the plastid. The protein localises to the chloroplast thylakoid membrane. In terms of biological role, this b-type cytochrome is tightly associated with the reaction center of photosystem II (PSII). PSII is a light-driven water:plastoquinone oxidoreductase that uses light energy to abstract electrons from H(2)O, generating O(2) and a proton gradient subsequently used for ATP formation. It consists of a core antenna complex that captures photons, and an electron transfer chain that converts photonic excitation into a charge separation. The sequence is that of Cytochrome b559 subunit beta from Ephedra sinica (Chinese ephedra).